We begin with the raw amino-acid sequence, 254 residues long: Ribosomal RNA small subunit methyltransferase J (254 aa).

S-adenosyl-L-methionine-binding positions include 107–108, 123–124, and Asp-174; these read RD and ER.

The protein belongs to the methyltransferase superfamily. RsmJ family.

Its subcellular location is the cytoplasm. The enzyme catalyses guanosine(1516) in 16S rRNA + S-adenosyl-L-methionine = N(2)-methylguanosine(1516) in 16S rRNA + S-adenosyl-L-homocysteine + H(+). In terms of biological role, specifically methylates the guanosine in position 1516 of 16S rRNA. This Coxiella burnetii (strain CbuK_Q154) (Coxiella burnetii (strain Q154)) protein is Ribosomal RNA small subunit methyltransferase J.